The sequence spans 547 residues: Chaperonin GroEL (547 aa).

ATP is bound by residues 30–33, K51, 87–91, G415, 478–480, and D494; these read TLGP, DGTTT, and NAA.

This sequence belongs to the chaperonin (HSP60) family. As to quaternary structure, forms a cylinder of 14 subunits composed of two heptameric rings stacked back-to-back. Interacts with the co-chaperonin GroES.

The protein localises to the cytoplasm. It carries out the reaction ATP + H2O + a folded polypeptide = ADP + phosphate + an unfolded polypeptide.. Together with its co-chaperonin GroES, plays an essential role in assisting protein folding. The GroEL-GroES system forms a nano-cage that allows encapsulation of the non-native substrate proteins and provides a physical environment optimized to promote and accelerate protein folding. This is Chaperonin GroEL from Geobacter sp. (strain M21).